The sequence spans 194 residues: Putative manganese efflux pump MntP (194 aa).

The next 6 helical transmembrane spans lie at 3 to 23 (PFSI…AAIG), 37 to 57 (LRAG…GWLL), 69 to 89 (DHWI…VAGL), 110 to 132 (LGLA…SLAF), 147 to 167 (CTFS…NLIG), and 172 to 192 (MLGG…HLSG).

Belongs to the MntP (TC 9.B.29) family.

It localises to the cell inner membrane. In terms of biological role, probably functions as a manganese efflux pump. This is Putative manganese efflux pump MntP from Xanthomonas euvesicatoria pv. vesicatoria (strain 85-10) (Xanthomonas campestris pv. vesicatoria).